Consider the following 272-residue polypeptide: Putative pyruvate, phosphate dikinase regulatory protein (272 aa).

151–158 is a binding site for ADP; the sequence is GISRTSKT.

The protein belongs to the pyruvate, phosphate/water dikinase regulatory protein family. PDRP subfamily.

The enzyme catalyses N(tele)-phospho-L-histidyl/L-threonyl-[pyruvate, phosphate dikinase] + ADP = N(tele)-phospho-L-histidyl/O-phospho-L-threonyl-[pyruvate, phosphate dikinase] + AMP + H(+). It carries out the reaction N(tele)-phospho-L-histidyl/O-phospho-L-threonyl-[pyruvate, phosphate dikinase] + phosphate + H(+) = N(tele)-phospho-L-histidyl/L-threonyl-[pyruvate, phosphate dikinase] + diphosphate. Its function is as follows. Bifunctional serine/threonine kinase and phosphorylase involved in the regulation of the pyruvate, phosphate dikinase (PPDK) by catalyzing its phosphorylation/dephosphorylation. The protein is Putative pyruvate, phosphate dikinase regulatory protein of Staphylococcus aureus (strain Mu3 / ATCC 700698).